Consider the following 146-residue polypeptide: Cytochrome c oxidase assembly factor 1 homolog (146 aa).

Residues 1–14 (MMWQKYAGSRRSMP) are Mitochondrial matrix-facing. Residues 15–37 (LGARILFHGVFYAGGFAIVYYLI) traverse the membrane as a helical segment. Over 38-146 (QKFHSRALYY…GENGDEVKKE (109 aa)) the chain is Mitochondrial intermembrane.

The protein belongs to the COA1 family. Component of the MITRAC (mitochondrial translation regulation assembly intermediate of cytochrome c oxidase complex) complex, the core components of this complex being COA3/MITRAC12 and COX14. Interacts with COX17 and COA6. Part of the mitochondrial complex I assembly/MCIA complex that comprises at least the core subunits TMEM126B, NDUFAF1, ECSIT and ACAD9 and complement subunits such as COA1 and TMEM186.

It localises to the mitochondrion inner membrane. Its function is as follows. Component of the MITRAC (mitochondrial translation regulation assembly intermediate of cytochrome c oxidase complex) complex, that regulates cytochrome c oxidase assembly. MITRAC complexes regulate both translation of mitochondrial encoded components and assembly of nuclear-encoded components imported in mitochondrion. Required for assembly of mitochondrial respiratory chain complex I and complex IV. As part of the MCIA complex, required for efficient assembly of the mitochondrial complex I. The chain is Cytochrome c oxidase assembly factor 1 homolog from Homo sapiens (Human).